The following is a 184-amino-acid chain: MGAVLSCCRNHSGEENEALLREQQAGYGSQGNANDEYDAEQMRLKEHEHEQKLLAREQELRDIVANTNDKLIDISMINNSGIVIQGTDLQEALDKRQQEEGGDSREDERSAGDDNLSGHSVPSSGSAQATTHQTAPRTNTFTLLTSPDSAKISKEQLKKLHSNILNEIFSQSQVNKPGPLTVPF.

The N-myristoyl glycine moiety is linked to residue G2. 2 S-palmitoyl cysteine lipidation sites follow: C7 and C8. Residues 30 to 71 (QGNANDEYDAEQMRLKEHEHEQKLLAREQELRDIVANTNDKL) are a coiled coil. Positions 89 to 147 (LQEALDKRQQEEGGDSREDERSAGDDNLSGHSVPSSGSAQATTHQTAPRTNTFTLLTSP) are disordered. Residues 92-112 (ALDKRQQEEGGDSREDERSAG) are compositionally biased toward basic and acidic residues. A compositionally biased stretch (polar residues) spans 117–147 (SGHSVPSSGSAQATTHQTAPRTNTFTLLTSP). 2 positions are modified to phosphoserine: S146 and S149.

Component of the GSE complex composed of GTR1, GTR2, SLM4, MEH1 and LTV1. Component of the EGO complex, at least composed of GTR2, SLM4 and MEH1.

It is found in the vacuole membrane. Component of the GSE complex, a GTPase complex required for intracellular sorting of GAP1 out of the endosome. Component of the EGO complex, a complex involved in the regulation of microautophagy. The protein is Protein MEH1 (MEH1) of Saccharomyces cerevisiae (strain ATCC 204508 / S288c) (Baker's yeast).